Reading from the N-terminus, the 260-residue chain is UPF0246 protein Mmwyl1_3597 (260 aa).

The protein belongs to the UPF0246 family.

This chain is UPF0246 protein Mmwyl1_3597, found in Marinomonas sp. (strain MWYL1).